We begin with the raw amino-acid sequence, 1668 residues long: Zinc finger CCCH domain-containing protein 13 (1668 aa).

2 disordered regions span residues 1-38 (MSKIRRKVTVENTKTISDSTSRRPSVFERLGPSTGSTA) and 56-157 (TCRF…GDIN). Over residues 10 to 23 (VENTKTISDSTSRR) the composition is skewed to polar residues. The C3H1-type zinc finger occupies 36–64 (STAETQCRNWLKTGNCLYGNTCRFVHGPS). Serine 64 and serine 77 each carry phosphoserine. Residues 76-136 (RSPERPTGDL…IKITKERTPE (61 aa)) show a composition bias toward basic and acidic residues. Residues lysine 179 and lysine 194 each participate in a glycyl lysine isopeptide (Lys-Gly) (interchain with G-Cter in SUMO2) cross-link. Disordered regions lie at residues 190 to 1112 (EIII…TATA) and 1125 to 1466 (AAAT…PISD). Residues serine 198, serine 207, serine 209, and serine 211 each carry the phosphoserine modification. Positions 204–213 (SKLSPSPSLR) are enriched in low complexity. The span at 214–224 (KSSKSPKRKSS) shows a compositional bias: basic residues. Threonine 237 carries the phosphothreonine modification. Phosphoserine occurs at positions 238 and 242. The segment covering 239-254 (AVSSPLLDQQRNSKTN) has biased composition (polar residues). Threonine 263 carries the phosphothreonine modification. A Phosphoserine modification is found at serine 265. Positions 283-315 (KYKVKDRIEEKTRDGKDRGRDFERQREKRDKPR) are enriched in basic and acidic residues. Phosphoserine occurs at positions 316, 318, 325, and 328. Over residues 323–346 (HHSPISSRHHSSSSQSGSSIQRHS) the composition is skewed to low complexity. 2 positions are modified to phosphothreonine: threonine 354 and threonine 364. Residues serine 370, serine 372, and serine 381 each carry the phosphoserine modification. The span at 370-382 (SASPYPSHSLSSP) shows a compositional bias: low complexity. 2 stretches are compositionally biased toward basic and acidic residues: residues 394–434 (PMRE…REER) and 442–575 (SSRD…EKGS). The span at 584–593 (DSHSSNSNYH) shows a compositional bias: low complexity. Over residues 594-640 (DSWETRSSYPERDRYPERDNRDQARDSSFERRHGERDRRDNRERDQR) the composition is skewed to basic and acidic residues. Serine 643 is modified (phosphoserine). The stretch at 645–789 (IRHQGRNDEL…RDKERERQRD (145 aa)) forms a coiled coil. The span at 649 to 821 (GRNDELERDE…NPRDGHDERK (173 aa)) shows a compositional bias: basic and acidic residues. Phosphoserine occurs at positions 831, 833, 837, 845, 848, 853, 873, 875, and 877. Over residues 881-957 (LTEDRQGRWK…TSDRAHDENK (77 aa)) the composition is skewed to basic and acidic residues. Phosphothreonine is present on threonine 882. Residue serine 943 is modified to Phosphoserine. Residues 958 to 969 (KKAKIQKKPIKK) show a composition bias toward basic residues. The span at 970–981 (KKEDDVGIERGN) shows a compositional bias: basic and acidic residues. Residues serine 986, serine 993, serine 1010, serine 1014, and serine 1017 each carry the phosphoserine modification. A compositionally biased stretch (basic residues) spans 996-1010 (KGQKKKSIEKKRKKS). Threonine 1033 carries the post-translational modification Phosphothreonine. Basic and acidic residues predominate over residues 1073–1083 (PDRTEVTEAEH). Composition is skewed to low complexity over residues 1084 to 1100 (TATATTPGSTPSPLSSL) and 1125 to 1153 (AAATSFSTSAITISTSATPTNTTNNTFAN). Positions 1163–1188 (TRVEKVETPHVTIEDAQHRKPMDQKR) are enriched in basic and acidic residues. Threonine 1170 carries the phosphothreonine modification. Residues serine 1191, serine 1194, serine 1208, and serine 1210 each carry the phosphoserine modification. The segment covering 1213–1223 (SAHRSGDDQSG) has biased composition (basic and acidic residues). Serine 1230 is modified (phosphoserine). 2 stretches are compositionally biased toward basic and acidic residues: residues 1231 to 1286 (GSRD…DRQV) and 1294 to 1379 (DSRD…DRTF). Residues 1300–1366 (QERDRYEHDR…RERERLISDS (67 aa)) are a coiled coil. Residues serine 1364, serine 1366, serine 1382, serine 1386, serine 1406, serine 1409, serine 1438, leucine 1453, glycine 1456, serine 1465, and aspartate 1466 each carry the phosphoserine modification. Composition is skewed to basic and acidic residues over residues 1386-1421 (SVKRCEAKLEGEHERDLESTSRDSLALDKERMDKDL) and 1429-1438 (ETNKSERTES).

The protein belongs to the ZC3H13 family. As to quaternary structure, component of the WMM complex, a N6-methyltransferase complex composed of a catalytic subcomplex, named MAC, and of an associated subcomplex, named MACOM. The MAC subcomplex is composed of METTL3 and METTL14. The MACOM subcomplex is composed of WTAP, ZC3H13, CBLL1/HAKAI, VIRMA, and, in some cases of RBM15 (RBM15 or RBM15B). Also a component of a MACOM-like complex, named WTAP complex, composed of WTAP, ZC3H13, CBLL1/HAKAI, VIRMA, RBM15, BCLAF1 and THRAP3.

Its subcellular location is the nucleus speckle. It is found in the nucleus. It localises to the nucleoplasm. Associated component of the WMM complex, a complex that mediates N6-methyladenosine (m6A) methylation of RNAs, a modification that plays a role in the efficiency of mRNA splicing and RNA processing. Acts as a key regulator of m6A methylation by promoting m6A methylation of mRNAs at the 3'-UTR. Controls embryonic stem cells (ESCs) pluripotency via its role in m6A methylation. In the WMM complex, anchors component of the MACOM subcomplex in the nucleus. Also required for bridging WTAP to the RNA-binding component RBM15 (RBM15 or RBM15B). The polypeptide is Zinc finger CCCH domain-containing protein 13 (Homo sapiens (Human)).